The sequence spans 53 residues: Large ribosomal subunit protein bL32c (53 aa).

The segment at 1–21 (MAVPKKRTSKSKKKSRRSHWI) is disordered.

This sequence belongs to the bacterial ribosomal protein bL32 family.

The protein resides in the plastid. Its subcellular location is the chloroplast. The protein is Large ribosomal subunit protein bL32c (rpl32) of Cyanidium caldarium (Red alga).